The chain runs to 358 residues: MRERLLAAERVKAIEWRDGTLRLLDQRLLPQEEVWLEHESAAEVAKAIRDMVVRGAPAIGISAAYGIVLGARARLAQGGDWRAALEEDFRLLADSRPTAVNLFWALNRMRDRLERMKEGDQPLAVLEAEAISIHESDREANLTMAQLGMELIRKQQGSPQNILTHCNTGALATGGFGTALGVIRAAHLEGLVNRIYADETRPWLQGSRLTAWELANEGIPVSLNVDSAAAHLMKTENITWVIVGADRITANGDVANKIGTYQLAVNAMHHGVRFMVVAPSSTIDMNLESGEDIPIEERDGRELLEIGGRRVAAEVDAYNPVFDVTPADLIDAIVTERGVVERPDAERMAALMSRKRLH.

Residues Arg-54–Ala-56, Arg-96, and Gln-205 contribute to the substrate site. The Proton donor role is filled by Asp-246. Asn-256–Lys-257 lines the substrate pocket.

The protein belongs to the eIF-2B alpha/beta/delta subunits family. MtnA subfamily.

It carries out the reaction 5-(methylsulfanyl)-alpha-D-ribose 1-phosphate = 5-(methylsulfanyl)-D-ribulose 1-phosphate. The protein operates within amino-acid biosynthesis; L-methionine biosynthesis via salvage pathway; L-methionine from S-methyl-5-thio-alpha-D-ribose 1-phosphate: step 1/6. Catalyzes the interconversion of methylthioribose-1-phosphate (MTR-1-P) into methylthioribulose-1-phosphate (MTRu-1-P). The chain is Methylthioribose-1-phosphate isomerase from Pseudomonas aeruginosa (strain UCBPP-PA14).